The following is a 200-amino-acid chain: Lipopolysaccharide core heptose(II)-phosphate phosphatase (200 aa).

A signal peptide spans 1–25 (MLAFCRSSLKSKKYFIILLALAAIA).

It belongs to the phosphoglycerate mutase family. Ais subfamily.

It localises to the periplasm. The protein operates within bacterial outer membrane biogenesis; lipopolysaccharide metabolism. In terms of biological role, catalyzes the dephosphorylation of heptose(II) of the outer membrane lipopolysaccharide core. This chain is Lipopolysaccharide core heptose(II)-phosphate phosphatase, found in Escherichia coli O157:H7 (strain EC4115 / EHEC).